A 158-amino-acid chain; its full sequence is Superoxide dismutase [Cu-Zn] (158 aa).

Cu cation is bound by residues H46, H48, and H63. A disulfide bridge links C57 with C149. Zn(2+) contacts are provided by H63, H71, H80, and D83. H120 contacts Cu cation.

Belongs to the Cu-Zn superoxide dismutase family. As to quaternary structure, homodimer. Cu cation is required as a cofactor. The cofactor is Zn(2+).

The protein localises to the cytoplasm. It carries out the reaction 2 superoxide + 2 H(+) = H2O2 + O2. Its function is as follows. Destroys radicals which are normally produced within the cells and which are toxic to biological systems. The sequence is that of Superoxide dismutase [Cu-Zn] (sod-1) from Onchocerca volvulus.